Here is a 445-residue protein sequence, read N- to C-terminus: tRNA modification GTPase MnmE (445 aa).

Positions 20, 79, and 119 each coordinate (6S)-5-formyl-5,6,7,8-tetrahydrofolate. Positions 215–371 constitute a TrmE-type G domain; it reads GLKLAIIGPP…ILKNIENIAE (157 aa). A K(+)-binding site is contributed by N225. Residues 225-230, 244-250, and 269-272 each bind GTP; these read NVGKSS, SNIAGTT, and DTAG. S229 contributes to the Mg(2+) binding site. Positions 244, 246, and 249 each coordinate K(+). A Mg(2+)-binding site is contributed by T250. K445 is a (6S)-5-formyl-5,6,7,8-tetrahydrofolate binding site.

Belongs to the TRAFAC class TrmE-Era-EngA-EngB-Septin-like GTPase superfamily. TrmE GTPase family. In terms of assembly, homodimer. Heterotetramer of two MnmE and two MnmG subunits. The cofactor is K(+).

It localises to the cytoplasm. Its function is as follows. Exhibits a very high intrinsic GTPase hydrolysis rate. Involved in the addition of a carboxymethylaminomethyl (cmnm) group at the wobble position (U34) of certain tRNAs, forming tRNA-cmnm(5)s(2)U34. In Rickettsia conorii (strain ATCC VR-613 / Malish 7), this protein is tRNA modification GTPase MnmE.